Consider the following 212-residue polypeptide: Peptide methionine sulfoxide reductase MsrA (212 aa).

Residues 1–14 show a composition bias toward polar residues; the sequence is MSSIDKTQRITQSD. Residues 1–21 are disordered; that stretch reads MSSIDKTQRITQSDALPGRST. Residue Cys-52 is part of the active site.

It belongs to the MsrA Met sulfoxide reductase family.

The catalysed reaction is L-methionyl-[protein] + [thioredoxin]-disulfide + H2O = L-methionyl-(S)-S-oxide-[protein] + [thioredoxin]-dithiol. The enzyme catalyses [thioredoxin]-disulfide + L-methionine + H2O = L-methionine (S)-S-oxide + [thioredoxin]-dithiol. Its function is as follows. Has an important function as a repair enzyme for proteins that have been inactivated by oxidation. Catalyzes the reversible oxidation-reduction of methionine sulfoxide in proteins to methionine. The protein is Peptide methionine sulfoxide reductase MsrA of Pectobacterium carotovorum subsp. carotovorum (strain PC1).